We begin with the raw amino-acid sequence, 132 residues long: Small ribosomal subunit protein uS9 (132 aa).

The protein belongs to the universal ribosomal protein uS9 family.

The chain is Small ribosomal subunit protein uS9 from Methanothrix thermoacetophila (strain DSM 6194 / JCM 14653 / NBRC 101360 / PT) (Methanosaeta thermophila).